The chain runs to 304 residues: Dihydroorotate dehydrogenase B (NAD(+)), catalytic subunit (304 aa).

FMN contacts are provided by residues Ser21 and 45–46 (KA). Substrate-binding positions include Lys45 and 69-73 (NAIGL). 2 residues coordinate FMN: Asn99 and Asn127. Position 127 (Asn127) interacts with substrate. Cys130 functions as the Nucleophile in the catalytic mechanism. The FMN site is built by Lys165 and Ile191. A substrate-binding site is contributed by 192–193 (NT). FMN-binding positions include Gly217, 243-244 (GG), and 265-266 (GT).

It belongs to the dihydroorotate dehydrogenase family. Type 1 subfamily. As to quaternary structure, heterotetramer of 2 PyrK and 2 PyrD type B subunits. Requires FMN as cofactor.

The protein localises to the cytoplasm. The catalysed reaction is (S)-dihydroorotate + NAD(+) = orotate + NADH + H(+). It functions in the pathway pyrimidine metabolism; UMP biosynthesis via de novo pathway; orotate from (S)-dihydroorotate (NAD(+) route): step 1/1. In terms of biological role, catalyzes the conversion of dihydroorotate to orotate with NAD(+) as electron acceptor. The chain is Dihydroorotate dehydrogenase B (NAD(+)), catalytic subunit (pyrD) from Listeria monocytogenes serotype 4a (strain HCC23).